The following is a 599-amino-acid chain: Sulfite reductase [NADPH] flavoprotein alpha-component (599 aa).

The Flavodoxin-like domain maps to 64–202; that stretch reads ITLISASQTG…AAAEWRARVV (139 aa). FMN-binding positions include 70-75, 117-120, and 153-162; these read SQTGNA, STQG, and LGDTSYEFFC. The FAD-binding FR-type domain maps to 234 to 448; sequence EAPLTATLSV…IEHNDNFRLP (215 aa). FAD is bound by residues Thr322, Ala356, 386-389, 404-406, Tyr410, and 419-422; these read RLYS, TVG, and GGAS. NADP(+)-binding positions include 519-520, 525-529, and Asp561; these read SR and KIYVQ. FAD is bound at residue Tyr599.

It belongs to the NADPH-dependent sulphite reductase flavoprotein subunit CysJ family. The protein in the N-terminal section; belongs to the flavodoxin family. This sequence in the C-terminal section; belongs to the flavoprotein pyridine nucleotide cytochrome reductase family. In terms of assembly, alpha(8)-beta(8). The alpha component is a flavoprotein, the beta component is a hemoprotein. Requires FAD as cofactor. FMN is required as a cofactor.

The catalysed reaction is hydrogen sulfide + 3 NADP(+) + 3 H2O = sulfite + 3 NADPH + 4 H(+). The protein operates within sulfur metabolism; hydrogen sulfide biosynthesis; hydrogen sulfide from sulfite (NADPH route): step 1/1. In terms of biological role, component of the sulfite reductase complex that catalyzes the 6-electron reduction of sulfite to sulfide. This is one of several activities required for the biosynthesis of L-cysteine from sulfate. The flavoprotein component catalyzes the electron flow from NADPH -&gt; FAD -&gt; FMN to the hemoprotein component. The protein is Sulfite reductase [NADPH] flavoprotein alpha-component of Klebsiella pneumoniae subsp. pneumoniae (strain ATCC 700721 / MGH 78578).